A 314-amino-acid polypeptide reads, in one-letter code: Ribonuclease Z (314 aa).

H61, H63, D65, H66, H137, D207, and H263 together coordinate Zn(2+). The active-site Proton acceptor is the D65.

This sequence belongs to the RNase Z family. Homodimer. The cofactor is Zn(2+).

It carries out the reaction Endonucleolytic cleavage of RNA, removing extra 3' nucleotides from tRNA precursor, generating 3' termini of tRNAs. A 3'-hydroxy group is left at the tRNA terminus and a 5'-phosphoryl group is left at the trailer molecule.. Zinc phosphodiesterase, which displays some tRNA 3'-processing endonuclease activity. Probably involved in tRNA maturation, by removing a 3'-trailer from precursor tRNA. The sequence is that of Ribonuclease Z from Thermococcus kodakarensis (strain ATCC BAA-918 / JCM 12380 / KOD1) (Pyrococcus kodakaraensis (strain KOD1)).